The chain runs to 825 residues: MRISLKWLRELVDFQLSPEELGEALTLAGFEVEEIEDRRTWADGVVLGRILAAEPHPNADKLQVCQVDLGSDRPATIVCGAANARPGILVAVATPGTHLPALSLTIAKADKRGVISEGMICSLAELGLEKSSEGIHEFPPDLDLEAHPLGSDVRPLLGLDDVVLDLTSTANRADALSMVGIAREVAALTRNPLRLPPVQPLQAKPIPNFQLRIADAKACPAYSGVLIEGVKVGPSPDWLKHRLAAAGMRSINNVVDITNLILLEWGQPLHAFDWDRLLQVMGKKKPTIEVRLAQPGETLKTLDGQTRTLQADSHLIVAGSQPVALAGVMGGEETEVGSTTTRIFLEAALFDPAVTRRSARSQGLRTEASTRYERGVNFATLDQARDRAVQLILELAGGAVAGLTTFDQRPPLERTLKLRLSRLIDVLGDEVQAADVEEILSALGFQLSRCEGANSQSALSPATETATVASCVWQVVVPPYRLRDIEREIDLIEEFARLYGYDRFSETLPTEPQVGSLSARETFTRQIREVLRGIGLTEVYHISLCPAEEDGSLVRIANPLSPEYSAVRNALLPGLVEAFRFNWDQGNGPLQAFEIGRVFAHALPPNPHPYREAEHIGGILGGDPNPHDWQHRNRPMDWFEAKGLLVSALERLGFGPEFRLDPPEEQSSLLHPGRQASLWIEGSRIGLFGQLHPRLCQEKGLPDQVYGFELQLDPLLESLERRGIVQFVPFSPFPAADRDIAFFAPLDLAVGEIEKVIRRAGGELLQSVQLFDEYRGQGVPAGQRSLAFRLVYRAPDRTLTDAEVEALQNQVRAQLATQFPVTLRS.

The 116-residue stretch at 39-154 folds into the tRNA-binding domain; the sequence is RTWADGVVLG…EAHPLGSDVR (116 aa). A B5 domain is found at 411-506; the sequence is PLERTLKLRL…RLYGYDRFSE (96 aa). Mg(2+)-binding residues include Asp484, Asp490, Glu493, and Glu494. One can recognise an FDX-ACB domain in the interval 731-824; it reads SPFPAADRDI…LATQFPVTLR (94 aa).

It belongs to the phenylalanyl-tRNA synthetase beta subunit family. Type 1 subfamily. In terms of assembly, tetramer of two alpha and two beta subunits. It depends on Mg(2+) as a cofactor.

Its subcellular location is the cytoplasm. It carries out the reaction tRNA(Phe) + L-phenylalanine + ATP = L-phenylalanyl-tRNA(Phe) + AMP + diphosphate + H(+). The protein is Phenylalanine--tRNA ligase beta subunit of Synechococcus sp. (strain JA-2-3B'a(2-13)) (Cyanobacteria bacterium Yellowstone B-Prime).